A 647-amino-acid chain; its full sequence is Threonine--tRNA ligase (647 aa).

Residues 1–63 (MEVRVEGQMV…PAGCTGIEPV (63 aa)) enclose the TGS domain. Residues 244–535 (DHRKLGRELS…LVENFAGALP (292 aa)) are catalytic. Zn(2+) contacts are provided by Cys-336, His-387, and His-512.

This sequence belongs to the class-II aminoacyl-tRNA synthetase family. In terms of assembly, homodimer. Zn(2+) serves as cofactor.

Its subcellular location is the cytoplasm. It carries out the reaction tRNA(Thr) + L-threonine + ATP = L-threonyl-tRNA(Thr) + AMP + diphosphate + H(+). Its function is as follows. Catalyzes the attachment of threonine to tRNA(Thr) in a two-step reaction: L-threonine is first activated by ATP to form Thr-AMP and then transferred to the acceptor end of tRNA(Thr). Also edits incorrectly charged L-seryl-tRNA(Thr). This Desulfovibrio desulfuricans (strain ATCC 27774 / DSM 6949 / MB) protein is Threonine--tRNA ligase.